A 385-amino-acid chain; its full sequence is Mitochondrial protein C2orf69 (385 aa).

Residues 1-24 constitute a mitochondrion transit peptide; the sequence is MWGFRLLRSPPLLLLLPQLGIGNA.

This sequence belongs to the C2orf69 family.

The protein resides in the mitochondrion matrix. May play a role in the respiratory chain. The polypeptide is Mitochondrial protein C2orf69 (C2orf69) (Homo sapiens (Human)).